A 328-amino-acid polypeptide reads, in one-letter code: D-cysteine desulfhydrase (328 aa).

Residue K51 is modified to N6-(pyridoxal phosphate)lysine.

It belongs to the ACC deaminase/D-cysteine desulfhydrase family. Homodimer. The cofactor is pyridoxal 5'-phosphate.

The enzyme catalyses D-cysteine + H2O = hydrogen sulfide + pyruvate + NH4(+) + H(+). In terms of biological role, catalyzes the alpha,beta-elimination reaction of D-cysteine and of several D-cysteine derivatives. It could be a defense mechanism against D-cysteine. This Salmonella typhimurium (strain LT2 / SGSC1412 / ATCC 700720) protein is D-cysteine desulfhydrase.